The chain runs to 515 residues: Interferon-induced, double-stranded RNA-activated protein kinase (515 aa).

At Ala-2 the chain carries N-acetylalanine. The DRBM 1 domain occupies 8-76 (FYMDKLNKYR…AKLAVDILDN (69 aa)). Lys-68 is covalently cross-linked (Glycyl lysine isopeptide (Lys-Gly) (interchain with G-Cter in ISG15)). Phosphothreonine is present on Thr-84. One can recognise a DRBM 2 domain in the interval 95-162 (NYIGLVNSFA…AKEAYQKLLK (68 aa)). Tyr-96 is modified (phosphotyrosine; by autocatalysis). A Glycyl lysine isopeptide (Lys-Gly) (interchain with G-Cter in ISG15) cross-link involves residue Lys-154. Residue Tyr-157 is modified to Phosphotyrosine; by autocatalysis. Positions 204-224 (ENVFTNGLGENKRKSGVKVSP) are disordered. Thr-233 carries the post-translational modification Phosphothreonine. Residues 241–515 (DFEDIEEIGL…ISEKKKRNTC (275 aa)) are interaction with TRAF5. One can recognise a Protein kinase domain in the interval 242–504 (FEDIEEIGLG…EILKTLAEWR (263 aa)). Residue 248 to 256 (IGLGGFGQV) participates in ATP binding. Tyr-268 carries the phosphotyrosine; by autocatalysis modification. Lys-271 serves as a coordination point for ATP. Asp-376 (proton acceptor) is an active-site residue. 2 positions are modified to phosphothreonine; by autocatalysis: Thr-409 and Thr-414. Ser-419 is modified (phosphoserine).

Belongs to the protein kinase superfamily. Ser/Thr protein kinase family. GCN2 subfamily. In terms of assembly, homodimer. Interacts with DNAJC3 and STRBP. Forms a complex with FANCA, FANCC, FANCG and HSP70. Interacts with ADAR/ADAR1. The inactive form interacts with NCK1. Interacts (via the kinase catalytic domain) with STAT3 (via SH2 domain), TRAF2 (C-terminus), TRAF5 (C-terminus) and TRAF6 (C-terminus). Interacts with MAP2K6, TARBP2, NLRP1, NLRC4 and AIM2. Interacts (via DRBM 1 domain) with DUS2L (via DRBM domain). Interacts with DHX9 (via N-terminus) and this interaction is dependent upon activation of the kinase. The inactive form interacts with GSN. Interacts with IKBKB/IKKB, NPM1, NLRP3 and IRS1. In terms of processing, autophosphorylated on several Ser, Thr and Tyr residues. Autophosphorylation of Thr-414 is dependent on Thr-409 and is stimulated by dsRNA binding and dimerization. Autophosphorylation apparently leads to the activation of the kinase. Tyrosine autophosphorylation is essential for efficient dsRNA-binding, dimerization, and kinase activation. Expressed in heart, lung, brain, kidney, testes, thymus and bone marrow.

The protein resides in the cytoplasm. Its subcellular location is the nucleus. The protein localises to the perinuclear region. It carries out the reaction L-seryl-[protein] + ATP = O-phospho-L-seryl-[protein] + ADP + H(+). It catalyses the reaction L-threonyl-[protein] + ATP = O-phospho-L-threonyl-[protein] + ADP + H(+). The catalysed reaction is L-tyrosyl-[protein] + ATP = O-phospho-L-tyrosyl-[protein] + ADP + H(+). Its activity is regulated as follows. Initially produced in an inactive form and is activated by binding to viral dsRNA, which causes dimerization and autophosphorylation in the activation loop and stimulation of function. ISGylation can activate it in the absence of viral infection. Can also be activated by heparin, pro-inflammatory stimuli, growth factors, cytokines, oxidative stress and the cellular protein PRKRA. Activity is markedly stimulated by manganese ions. Activation is blocked by the cellular proteins TARBP2, DUS2L, NPM1, NCK1 and ADAR. Its function is as follows. IFN-induced dsRNA-dependent serine/threonine-protein kinase that phosphorylates the alpha subunit of eukaryotic translation initiation factor 2 (EIF2S1/eIF-2-alpha) and plays a key role in the innate immune response to viral infection. Inhibits viral replication via the integrated stress response (ISR): EIF2S1/eIF-2-alpha phosphorylation in response to viral infection converts EIF2S1/eIF-2-alpha in a global protein synthesis inhibitor, resulting to a shutdown of cellular and viral protein synthesis, while concomitantly initiating the preferential translation of ISR-specific mRNAs, such as the transcriptional activator ATF4. Exerts its antiviral activity on a wide range of DNA and RNA viruses including west nile virus (WNV), sindbis virus (SV), foot-and-mouth virus (FMDV), semliki Forest virus (SFV) and lymphocytic choriomeningitis virus (LCMV). Also involved in the regulation of signal transduction, apoptosis, cell proliferation and differentiation: phosphorylates other substrates including p53/TP53, PPP2R5A, DHX9, ILF3, and IRS1. In addition to serine/threonine-protein kinase activity, also has tyrosine-protein kinase activity and phosphorylates CDK1 at 'Tyr-4' upon DNA damage, facilitating its ubiquitination and proteasomal degradation. Either as an adapter protein and/or via its kinase activity, can regulate various signaling pathways (p38 MAP kinase, NF-kappa-B and insulin signaling pathways) and transcription factors (JUN, STAT1, STAT3, IRF1, ATF3) involved in the expression of genes encoding pro-inflammatory cytokines and IFNs. Activates the NF-kappa-B pathway via interaction with IKBKB and TRAF family of proteins and activates the p38 MAP kinase pathway via interaction with MAP2K6. Can act as both a positive and negative regulator of the insulin signaling pathway (ISP). Negatively regulates ISP by inducing the inhibitory phosphorylation of insulin receptor substrate 1 (IRS1) at 'Ser-312' and positively regulates ISP via phosphorylation of PPP2R5A which activates FOXO1, which in turn up-regulates the expression of insulin receptor substrate 2 (IRS2). Can regulate NLRP3 inflammasome assembly and the activation of NLRP3, NLRP1, AIM2 and NLRC4 inflammasomes. Plays a role in the regulation of the cytoskeleton by binding to gelsolin (GSN), sequestering the protein in an inactive conformation away from actin. The chain is Interferon-induced, double-stranded RNA-activated protein kinase (Eif2ak2) from Mus musculus (Mouse).